Reading from the N-terminus, the 212-residue chain is Adenylate kinase (212 aa).

10 to 15 (GAGKGT) is an ATP binding site. Positions 30-59 (AIGDIFRTIIKTSTSEAELINNYVRQGELI) are NMP. AMP is bound by residues R36, 57 to 59 (ELI), 85 to 88 (GYPR), and Q92. The LID stretch occupies residues 122 to 160 (GRYSCKNCGKIYNRYFLQPKTDNVCDVCGSSTFDYRKDD). R123 provides a ligand contact to ATP. Zn(2+) contacts are provided by C126 and C129. 132 to 133 (IY) lines the ATP pocket. Residues C146 and C149 each coordinate Zn(2+). Residues R157 and R168 each coordinate AMP. K196 serves as a coordination point for ATP.

Belongs to the adenylate kinase family. In terms of assembly, monomer.

It is found in the cytoplasm. It carries out the reaction AMP + ATP = 2 ADP. The protein operates within purine metabolism; AMP biosynthesis via salvage pathway; AMP from ADP: step 1/1. Catalyzes the reversible transfer of the terminal phosphate group between ATP and AMP. Plays an important role in cellular energy homeostasis and in adenine nucleotide metabolism. The chain is Adenylate kinase from Rickettsia rickettsii (strain Iowa).